The chain runs to 376 residues: 1-deoxy-D-xylulose 5-phosphate reductoisomerase (376 aa).

NADPH is bound by residues T12, G13, S14, I15, R39, Q40, and N110. K111 serves as a coordination point for 1-deoxy-D-xylulose 5-phosphate. Position 112 (E112) interacts with NADPH. Residue D136 participates in Mn(2+) binding. 4 residues coordinate 1-deoxy-D-xylulose 5-phosphate: S137, E138, S162, and H185. E138 contributes to the Mn(2+) binding site. Residue G191 coordinates NADPH. 1-deoxy-D-xylulose 5-phosphate is bound by residues S198, N203, K204, and E207. E207 is a binding site for Mn(2+).

The protein belongs to the DXR family. Mg(2+) serves as cofactor. Mn(2+) is required as a cofactor.

It catalyses the reaction 2-C-methyl-D-erythritol 4-phosphate + NADP(+) = 1-deoxy-D-xylulose 5-phosphate + NADPH + H(+). The protein operates within isoprenoid biosynthesis; isopentenyl diphosphate biosynthesis via DXP pathway; isopentenyl diphosphate from 1-deoxy-D-xylulose 5-phosphate: step 1/6. Catalyzes the NADPH-dependent rearrangement and reduction of 1-deoxy-D-xylulose-5-phosphate (DXP) to 2-C-methyl-D-erythritol 4-phosphate (MEP). This Treponema pallidum (strain Nichols) protein is 1-deoxy-D-xylulose 5-phosphate reductoisomerase.